We begin with the raw amino-acid sequence, 153 residues long: SsrA-binding protein (153 aa).

The segment covering 132–142 (ALKRKEAEREA) has biased composition (basic and acidic residues). The interval 132 to 153 (ALKRKEAEREAQSAMKRYAKGY) is disordered.

This sequence belongs to the SmpB family.

It localises to the cytoplasm. Required for rescue of stalled ribosomes mediated by trans-translation. Binds to transfer-messenger RNA (tmRNA), required for stable association of tmRNA with ribosomes. tmRNA and SmpB together mimic tRNA shape, replacing the anticodon stem-loop with SmpB. tmRNA is encoded by the ssrA gene; the 2 termini fold to resemble tRNA(Ala) and it encodes a 'tag peptide', a short internal open reading frame. During trans-translation Ala-aminoacylated tmRNA acts like a tRNA, entering the A-site of stalled ribosomes, displacing the stalled mRNA. The ribosome then switches to translate the ORF on the tmRNA; the nascent peptide is terminated with the 'tag peptide' encoded by the tmRNA and targeted for degradation. The ribosome is freed to recommence translation, which seems to be the essential function of trans-translation. This is SsrA-binding protein from Campylobacter hominis (strain ATCC BAA-381 / DSM 21671 / CCUG 45161 / LMG 19568 / NCTC 13146 / CH001A).